The following is an 848-amino-acid chain: Probable serine/threonine-protein kinase DDB_G0278535 (848 aa).

3 stretches are compositionally biased toward low complexity: residues Met1–His52, Thr60–Thr85, and Thr95–Ser116. Positions Met1–Val117 are disordered. ANK repeat units follow at residues Met181–Ile212, Ser218–Ile248, Asp252–Ala285, Asn289–Val320, and Arg324–Ile353. The SAM domain maps to Lys378–Gln441. The segment at Asn448–Asn478 is disordered. Positions Thr452–Ser472 are enriched in low complexity. One can recognise a Protein kinase domain in the interval Leu529–Met799. Residues Leu535–Val543 and Lys556 each bind ATP. The active-site Proton acceptor is the Asp650. Residues Arg810–Thr848 form a disordered region. Residues Thr822–Thr848 are compositionally biased toward low complexity.

It belongs to the protein kinase superfamily. TKL Ser/Thr protein kinase family.

It carries out the reaction L-seryl-[protein] + ATP = O-phospho-L-seryl-[protein] + ADP + H(+). The enzyme catalyses L-threonyl-[protein] + ATP = O-phospho-L-threonyl-[protein] + ADP + H(+). The sequence is that of Probable serine/threonine-protein kinase DDB_G0278535 from Dictyostelium discoideum (Social amoeba).